Here is a 207-residue protein sequence, read N- to C-terminus: NADH-quinone oxidoreductase subunit C (207 aa).

It belongs to the complex I 30 kDa subunit family. In terms of assembly, NDH-1 is composed of 14 different subunits. Subunits NuoB, C, D, E, F, and G constitute the peripheral sector of the complex.

The protein localises to the cell inner membrane. The enzyme catalyses a quinone + NADH + 5 H(+)(in) = a quinol + NAD(+) + 4 H(+)(out). Functionally, NDH-1 shuttles electrons from NADH, via FMN and iron-sulfur (Fe-S) centers, to quinones in the respiratory chain. The immediate electron acceptor for the enzyme in this species is believed to be ubiquinone. Couples the redox reaction to proton translocation (for every two electrons transferred, four hydrogen ions are translocated across the cytoplasmic membrane), and thus conserves the redox energy in a proton gradient. This Jannaschia sp. (strain CCS1) protein is NADH-quinone oxidoreductase subunit C.